The following is a 355-amino-acid chain: MSVNYAAGLSPYADKGKCGLPEIFDPPEELERKVWELARLVWQSSHVVFHTGAGISTASGIPDFRGPHGVWTMEERGLAPKFDTTFESARPTQTHMALVQLERVGLLRFLVSQNVDGLHVRSGFPRDKLAELHGNMFVEECAKCKTQYVRDTVVGTMGLKATGRLCTVAKARGLRACRGELRDTILDWEDSLPDRDLALADEASRNADLSITLGTSLQIRPSGNLPLATKRRGGRLVIVNLQPTKHDRHADLRIHGYVDEVMTRLMKHLGLEIPAWDGPHVLERALPPLPRPPTPKLEPKEESPTRINGSIPAGSCLEPCAQHNGSEPASPKRERPTSPAPNRPPKRVKAEAVPS.

Residue Ser-2 is modified to N-acetylserine. Phosphoserine is present on Ser-10. The region spanning 27-272 is the Deacetylase sirtuin-type domain; the sequence is PEELERKVWE…TRLMKHLGLE (246 aa). Lys-33 is subject to N6-acetyllysine. Residues Ala-53, Thr-57, Phe-64, Arg-65, Trp-71, Gln-113, and His-133 each coordinate NAD(+). The active-site Proton acceptor is the His-133. Zn(2+) contacts are provided by Cys-141, Cys-144, and Cys-166. Lys-170 participates in a covalent cross-link: Glycyl lysine isopeptide (Lys-Gly) (interchain with G-Cter in ubiquitin). A Zn(2+)-binding site is contributed by Cys-177. Gly-214, Ser-216, Asn-240, Gln-242, and Val-258 together coordinate NAD(+). Positions 284-355 are disordered; the sequence is RALPPLPRPP…KRVKAEAVPS (72 aa). Pro residues predominate over residues 287 to 296; sequence PPLPRPPTPK. Thr-294 bears the Phosphothreonine mark. 2 positions are modified to phosphoserine: Ser-303 and Ser-330.

The protein belongs to the sirtuin family. Class IV subfamily. As to quaternary structure, homodimer; binds to nucleosomes and DNA ends as a homodimer. Interacts with RELA; interferes with RELA binding to target DNA. Interacts with SMARCA5; promoting recruitment of SMARCA5/SNF2H to double-strand breaks (DSBs) sites. Interacts with the mTORC2 complex; preventing the ability of SIRT6 to deacetylate FOXO1. Interacts with the CLOCK-BMAL1 complex; recruited by the CLOCK-BMAL1 complex to regulate expression of clock-controlled genes. Interacts with CSNK2A2; preventing CSNK2A2 localization to the nucleus. Post-translationally, acetylated at Lys-33. Deacetylation at Lys-33 by SIRT1 promotes homomultimerization and binding to double-strand breaks (DSBs) sites. In terms of processing, phosphorylation at Ser-10 by MAPK8/JNK1 in response to oxidative stress stimulates the mono-ADP-ribosyltransferase activity on PARP1, leading to PARP1 recruitment to double-strand breaks (DSBs). Monoubiquitinated at Lys-170 by STUB1/CHIP, preventing its degradation by the proteasome. Post-translationally, sumoylated, leading to specifically decrease ability to deacetylate histone H3 at 'Lys-56' (H3K56ac).

It localises to the nucleus. It is found in the chromosome. The protein localises to the telomere. The protein resides in the endoplasmic reticulum. The enzyme catalyses N(6)-acetyl-L-lysyl-[protein] + NAD(+) + H2O = 2''-O-acetyl-ADP-D-ribose + nicotinamide + L-lysyl-[protein]. The catalysed reaction is N(6)-tetradecanoyl-L-lysyl-[protein] + NAD(+) + H2O = 2''-O-tetradecanoyl-ADP-D-ribose + nicotinamide + L-lysyl-[protein]. It catalyses the reaction N(6)-hexadecanoyl-L-lysyl-[protein] + NAD(+) + H2O = 2''-O-hexadecanoyl-ADP-D-ribose + nicotinamide + L-lysyl-[protein]. It carries out the reaction L-lysyl-[protein] + NAD(+) = N(6)-(ADP-D-ribosyl)-L-lysyl-[protein] + nicotinamide + H(+). The enzyme catalyses L-arginyl-[protein] + NAD(+) = N(omega)-(ADP-D-ribosyl)-L-arginyl-[protein] + nicotinamide + H(+). Compared to the defatty-acylase activity, the protein deacetylase activity is weak in vitro, and requires activation. The histone deacetylase activity is strongly activated upon binding to nucleosomes and chromatin in vivo. Two molecules of SIRT6 associate with the acidic patch of one nucleosome, while the C-terminal disordered region of SIRT6 associates with nucleosomal DNA, leading to efficient histone deacetylation. The protein-lysine deacetylase activity is also activated by long-chain free fatty-acids. NAD-dependent protein deacetylase, deacylase and mono-ADP-ribosyltransferase that plays an essential role in DNA damage repair, telomere maintenance, metabolic homeostasis, inflammation, tumorigenesis and aging. Displays protein-lysine deacetylase or defatty-acylase (demyristoylase and depalmitoylase) activity, depending on the context. Acts as a key histone deacetylase by catalyzing deacetylation of histone H3 at 'Lys-9', 'Lys-18' and 'Lys-56' (H3K9ac, H3K18ac and H3K56ac, respectively), suppressing target gene expression of several transcription factors, including NF-kappa-B. Acts as an inhibitor of transcription elongation by mediating deacetylation of H3K9ac and H3K56ac, preventing release of NELFE from chromatin and causing transcriptional pausing. Involved in DNA repair by promoting double-strand break (DSB) repair: acts as a DSB sensor by recognizing and binding DSB sites, leading to (1) recruitment of DNA repair proteins, such as SMARCA5/SNF2H, and (2) deacetylation of histone H3K9ac and H3K56ac. SIRT6 participation to DSB repair is probably involved in extension of life span. Also promotes DNA repair by deacetylating non-histone proteins, such as DDB2 and p53/TP53. Specifically deacetylates H3K18ac at pericentric heterochromatin, thereby maintaining pericentric heterochromatin silencing at centromeres and protecting against genomic instability and cellular senescence. Involved in telomere maintenance by catalyzing deacetylation of histone H3 in telomeric chromatin, regulating telomere position effect and telomere movement in response to DNA damage. Required for embryonic stem cell differentiation by mediating histone deacetylation of H3K9ac. Plays a major role in metabolism by regulating processes such as glycolysis, gluconeogenesis, insulin secretion and lipid metabolism. Inhibits glycolysis via histone deacetylase activity and by acting as a corepressor of the transcription factor HIF1A, thereby controlling the expression of multiple glycolytic genes. Has tumor suppressor activity by repressing glycolysis, thereby inhibiting the Warburg effect. Also regulates glycolysis and tumorigenesis by mediating deacetylation and nuclear export of non-histone proteins, such as isoform M2 of PKM (PKM2). Acts as a negative regulator of gluconeogenesis by mediating deacetylation of non-histone proteins, such as FOXO1 and KAT2A/GCN5. Promotes beta-oxidation of fatty acids during fasting by catalyzing deacetylation of NCOA2, inducing coactivation of PPARA. Acts as a regulator of lipid catabolism in brown adipocytes, both by catalyzing deacetylation of histones and non-histone proteins, such as FOXO1. Also acts as a regulator of circadian rhythms, both by regulating expression of clock-controlled genes involved in lipid and carbohydrate metabolism, and by catalyzing deacetylation of PER2. The defatty-acylase activity is specifically involved in regulation of protein secretion. Has high activity toward long-chain fatty acyl groups and mediates protein-lysine demyristoylation and depalmitoylation of target proteins, such as RRAS2 and TNF, thereby regulating their secretion. Also acts as a mono-ADP-ribosyltransferase by mediating mono-ADP-ribosylation of PARP1, TRIM28/KAP1 or SMARCC2/BAF170. Mono-ADP-ribosyltransferase activity is involved in DNA repair, cellular senescence, repression of LINE-1 retrotransposon elements and regulation of transcription. This chain is NAD-dependent protein deacylase sirtuin-6, found in Macaca fascicularis (Crab-eating macaque).